Here is a 217-residue protein sequence, read N- to C-terminus: Deoxyribose-phosphate aldolase 1 (217 aa).

Asp89 functions as the Proton donor/acceptor in the catalytic mechanism. Lys151 acts as the Schiff-base intermediate with acetaldehyde in catalysis. Residue Lys180 is the Proton donor/acceptor of the active site.

Belongs to the DeoC/FbaB aldolase family. DeoC type 1 subfamily.

Its subcellular location is the cytoplasm. The catalysed reaction is 2-deoxy-D-ribose 5-phosphate = D-glyceraldehyde 3-phosphate + acetaldehyde. The protein operates within carbohydrate degradation; 2-deoxy-D-ribose 1-phosphate degradation; D-glyceraldehyde 3-phosphate and acetaldehyde from 2-deoxy-alpha-D-ribose 1-phosphate: step 2/2. Catalyzes a reversible aldol reaction between acetaldehyde and D-glyceraldehyde 3-phosphate to generate 2-deoxy-D-ribose 5-phosphate. The polypeptide is Deoxyribose-phosphate aldolase 1 (Cutibacterium acnes (strain DSM 16379 / KPA171202) (Propionibacterium acnes)).